Reading from the N-terminus, the 528-residue chain is 3-ketoacyl-CoA synthase 2 (528 aa).

Transmembrane regions (helical) follow at residues 36 to 56 (LGYHYLISNAVYILILPVGLL) and 78 to 98 (FHFLSSTLFAALLIFLTTLYF). Residues 97–388 (YFTTRPRRIF…FFATLVARKV (292 aa)) form the FAE domain. Catalysis depends on residues Cys241, His320, His407, His411, and Asn444.

Belongs to the thiolase-like superfamily. Chalcone/stilbene synthases family. As to expression, expressed in siliques, flowers and stems. In young seedlings, expressed in the central cylinder of primary roots, in emerging lateral roots and in their root cap, but not in aboveground tissues such as hypocotyls, cotyledons and leaves. Expressed in sepals in mature flowers and in the chalaza and micropyle region of developing seeds shortly prior to or just after the detachment from the funiculus. Expressed in roots, flowers, cauline leaves and siliques.

Its subcellular location is the membrane. It carries out the reaction a very-long-chain acyl-CoA + malonyl-CoA + H(+) = a very-long-chain 3-oxoacyl-CoA + CO2 + CoA. The protein operates within lipid metabolism; fatty acid biosynthesis. With respect to regulation, inhibited by K3 herbicides such as allidochlor, anilofos, cafenstrole and flufenacet. Strongly inhibited by metazachlor. Its function is as follows. Mediates the synthesis of VLCFAs from 22 to 26 carbons in length (e.g. C22, C24, C26). Involved in the elongation of C20 fatty acid suberin precursors. Functionally redundant with KCS20 in the two-carbon elongation of C22 fatty acids that is required for cuticular wax and root suberin biosynthesis. This chain is 3-ketoacyl-CoA synthase 2, found in Arabidopsis thaliana (Mouse-ear cress).